Consider the following 339-residue polypeptide: Dihydroorotate dehydrogenase (quinone) (339 aa).

Residues 62-66 (AGLDK) and Thr-86 contribute to the FMN site. Residue Lys-66 coordinates substrate. 111–115 (NRMGF) contributes to the substrate binding site. Asn-139 and Asn-172 together coordinate FMN. Residue Asn-172 participates in substrate binding. Ser-175 acts as the Nucleophile in catalysis. Asn-177 contacts substrate. Residues Lys-217 and Thr-245 each contribute to the FMN site. Substrate is bound at residue 246 to 247 (NT). Residues Gly-268, Gly-297, and 318–319 (YS) contribute to the FMN site.

The protein belongs to the dihydroorotate dehydrogenase family. Type 2 subfamily. As to quaternary structure, monomer. FMN is required as a cofactor.

It localises to the cell membrane. The enzyme catalyses (S)-dihydroorotate + a quinone = orotate + a quinol. The protein operates within pyrimidine metabolism; UMP biosynthesis via de novo pathway; orotate from (S)-dihydroorotate (quinone route): step 1/1. In terms of biological role, catalyzes the conversion of dihydroorotate to orotate with quinone as electron acceptor. In Shewanella denitrificans (strain OS217 / ATCC BAA-1090 / DSM 15013), this protein is Dihydroorotate dehydrogenase (quinone).